A 212-amino-acid polypeptide reads, in one-letter code: Ribonuclease HII (212 aa).

The region spanning 1 to 205 is the RNase H type-2 domain; sequence MTICGVDEAG…VQDILDRASQ (205 aa). A divalent metal cation contacts are provided by Asp-7, Glu-8, and Asp-100.

It belongs to the RNase HII family. Requires Mn(2+) as cofactor. Mg(2+) is required as a cofactor.

It is found in the cytoplasm. The enzyme catalyses Endonucleolytic cleavage to 5'-phosphomonoester.. Its function is as follows. Endonuclease that specifically degrades the RNA of RNA-DNA hybrids. The protein is Ribonuclease HII of Methanocorpusculum labreanum (strain ATCC 43576 / DSM 4855 / Z).